A 190-amino-acid polypeptide reads, in one-letter code: ATP synthase subunit delta (190 aa).

This sequence belongs to the ATPase delta chain family. F-type ATPases have 2 components, F(1) - the catalytic core - and F(0) - the membrane proton channel. F(1) has five subunits: alpha(3), beta(3), gamma(1), delta(1), epsilon(1). F(0) has three main subunits: a(1), b(2) and c(10-14). The alpha and beta chains form an alternating ring which encloses part of the gamma chain. F(1) is attached to F(0) by a central stalk formed by the gamma and epsilon chains, while a peripheral stalk is formed by the delta and b chains.

The protein localises to the cell inner membrane. In terms of biological role, f(1)F(0) ATP synthase produces ATP from ADP in the presence of a proton or sodium gradient. F-type ATPases consist of two structural domains, F(1) containing the extramembraneous catalytic core and F(0) containing the membrane proton channel, linked together by a central stalk and a peripheral stalk. During catalysis, ATP synthesis in the catalytic domain of F(1) is coupled via a rotary mechanism of the central stalk subunits to proton translocation. Functionally, this protein is part of the stalk that links CF(0) to CF(1). It either transmits conformational changes from CF(0) to CF(1) or is implicated in proton conduction. This chain is ATP synthase subunit delta, found in Methylobacterium nodulans (strain LMG 21967 / CNCM I-2342 / ORS 2060).